Consider the following 359-residue polypeptide: Cyclin-Y-like protein 1 (359 aa).

Phosphoserine is present on residues Ser-67, Ser-105, and Ser-112. In terms of domain architecture, Cyclin N-terminal spans 145–267 (VTLAIYYHIK…CQILKDITVE (123 aa)). Ser-344 carries the phosphoserine modification.

Belongs to the cyclin family. Cyclin Y subfamily. As to quaternary structure, interacts with CDK16; this interaction mutually increases the stability of CDK16 and CCNYL1 and increases the kinase activity of CDK16.

The protein localises to the cell membrane. Key regulator of Wnt signaling implicated in various biological processes including male fertility, embryonic neurogenesis and cortex development. Activates the cyclin-dependent kinase CDK16, and promotes sperm maturation. This chain is Cyclin-Y-like protein 1, found in Homo sapiens (Human).